Consider the following 433-residue polypeptide: E3 ubiquitin-protein ligase RNF26 (433 aa).

5 helical membrane passes run 24–44 (LNFL…AFVY), 60–80 (GVLL…CGGL), 147–169 (VINS…VLAL), 183–203 (VVAA…ILLW), and 220–240 (LASF…VLAV). An RING-type zinc finger spans residues 380–422 (CVICQDQSKTVLLLPCRHLCLCQACTEILMRHPVYHRNCPLCR).

As to quaternary structure, interacts with INCA1. Interacts with TMEM43, ENDOD1, TMEM33 and TMED1 to form a complex capable of modulating innate immune signaling through the cGAS-STING pathway. Interacts with UBE2J1; this interaction is important for SQSTM1 ubiquitination. As to expression, ubiquitous. Up-regulated in several cancer cell lines.

Its subcellular location is the endoplasmic reticulum membrane. The enzyme catalyses S-ubiquitinyl-[E2 ubiquitin-conjugating enzyme]-L-cysteine + [acceptor protein]-L-lysine = [E2 ubiquitin-conjugating enzyme]-L-cysteine + N(6)-ubiquitinyl-[acceptor protein]-L-lysine.. It functions in the pathway protein modification; protein ubiquitination. E3 ubiquitin-protein ligase that plays a key role in endosome organization by retaining vesicles in the perinuclear cloud. Acts as a platform for perinuclear positioning of the endosomal system by mediating ubiquitination of SQSTM1 through interaction with the ubiquitin conjugating enzyme UBE2J1. Ubiquitinated SQSTM1 attracts specific vesicle-associated adapters, forming a molecular bridge that restrains cognate vesicles in the perinuclear region and organizes the endosomal pathway for efficient cargo transport. Also acts as a regulator of type I interferon production in response to viral infection by mediating the formation of 'Lys-11'-linked polyubiquitin chains on TMEM173/STING, leading to stabilize TMEM173/STING. Also required to limit type I interferon response by promoting autophagic degradation of IRF3. This is E3 ubiquitin-protein ligase RNF26 from Homo sapiens (Human).